Reading from the N-terminus, the 492-residue chain is Ribose import ATP-binding protein RbsA (492 aa).

ABC transporter domains are found at residues 3-239 and 238-492; these read IDMR…VGRK and RKLE…TGGK. 35–42 is a binding site for ATP; that stretch reads GENGAGKS.

It belongs to the ABC transporter superfamily. Ribose importer (TC 3.A.1.2.1) family. In terms of assembly, the complex is composed of an ATP-binding protein (RbsA), two transmembrane proteins (RbsC) and a solute-binding protein (RbsB).

Its subcellular location is the cell membrane. It catalyses the reaction D-ribose(out) + ATP + H2O = D-ribose(in) + ADP + phosphate + H(+). In terms of biological role, part of the ABC transporter complex RbsABC involved in ribose import. Responsible for energy coupling to the transport system. The polypeptide is Ribose import ATP-binding protein RbsA (Streptococcus agalactiae serotype III (strain NEM316)).